The chain runs to 176 residues: dCTP deaminase (176 aa).

DCTP-binding positions include 102 to 107 (RSTFAR) and Asp-118. Glu-128 acts as the Proton donor/acceptor in catalysis. DCTP-binding residues include Tyr-160, Lys-166, and Gln-167.

It belongs to the dCTP deaminase family. Homotrimer.

It carries out the reaction dCTP + H2O + H(+) = dUTP + NH4(+). The protein operates within pyrimidine metabolism; dUMP biosynthesis; dUMP from dCTP (dUTP route): step 1/2. In terms of biological role, catalyzes the deamination of dCTP to dUTP. The sequence is that of dCTP deaminase from Staphylothermus marinus (strain ATCC 43588 / DSM 3639 / JCM 9404 / F1).